A 214-amino-acid chain; its full sequence is Small ribosomal subunit protein uS5 (214 aa).

The 64-residue stretch at 54-117 folds into the S5 DRBM domain; that stretch reads LKYEVMDIKI…KNAKMNIIPV (64 aa).

The protein belongs to the universal ribosomal protein uS5 family. As to quaternary structure, part of the 30S ribosomal subunit. Contacts protein S4.

In terms of biological role, with S4 and S12 plays an important role in translational accuracy. The chain is Small ribosomal subunit protein uS5 from Sulfurisphaera tokodaii (strain DSM 16993 / JCM 10545 / NBRC 100140 / 7) (Sulfolobus tokodaii).